The primary structure comprises 156 residues: Cytochrome c-type biogenesis protein CcmE 1 (156 aa).

Residues 1–8 lie on the Cytoplasmic side of the membrane; that stretch reads MNATRKQR. Residues 9–29 form a helical; Signal-anchor for type II membrane protein membrane-spanning segment; it reads LWLVIGVLAAAALAVTLIVFA. Residues 30–156 are Periplasmic-facing; the sequence is LQRNMSYLFT…ATVAPLTAPR (127 aa). Heme-binding residues include histidine 123 and tyrosine 127.

It belongs to the CcmE/CycJ family.

It is found in the cell inner membrane. In terms of biological role, heme chaperone required for the biogenesis of c-type cytochromes. Transiently binds heme delivered by CcmC and transfers the heme to apo-cytochromes in a process facilitated by CcmF and CcmH. The sequence is that of Cytochrome c-type biogenesis protein CcmE 1 from Xanthomonas axonopodis pv. citri (strain 306).